We begin with the raw amino-acid sequence, 424 residues long: Adenylosuccinate synthetase (424 aa).

Residues 12-18 (GDEGKGK) and 40-42 (GHT) contribute to the GTP site. Asp-13 acts as the Proton acceptor in catalysis. The Mg(2+) site is built by Asp-13 and Gly-40. IMP-binding positions include 13-16 (DEGK), 38-41 (NAGH), Thr-130, Arg-144, Asn-220, Thr-235, and Arg-299. His-41 (proton donor) is an active-site residue. Residue 295–301 (VTTGRRR) coordinates substrate. Residues Arg-301, 327 to 329 (KLD), and 412 to 414 (GTG) each bind GTP.

Belongs to the adenylosuccinate synthetase family. Homodimer. It depends on Mg(2+) as a cofactor.

The protein localises to the cytoplasm. It catalyses the reaction IMP + L-aspartate + GTP = N(6)-(1,2-dicarboxyethyl)-AMP + GDP + phosphate + 2 H(+). It functions in the pathway purine metabolism; AMP biosynthesis via de novo pathway; AMP from IMP: step 1/2. Its function is as follows. Plays an important role in the de novo pathway and in the salvage pathway of purine nucleotide biosynthesis. Catalyzes the first committed step in the biosynthesis of AMP from IMP. The polypeptide is Adenylosuccinate synthetase (Neosartorya fischeri (strain ATCC 1020 / DSM 3700 / CBS 544.65 / FGSC A1164 / JCM 1740 / NRRL 181 / WB 181) (Aspergillus fischerianus)).